A 570-amino-acid polypeptide reads, in one-letter code: Protein translocase subunit SecD (570 aa).

A compositionally biased stretch (polar residues) spans 104–117 (GANATGTPSASETG). The disordered stretch occupies residues 104–198 (GANATGTPSA…SASASGDDAT (95 aa)). Residues 122–146 (KATDKATDKATDKATDGDKATDGDK) show a composition bias toward basic and acidic residues. Low complexity-rich tracts occupy residues 147-161 (ASGT…SATS) and 172-196 (ADPS…SGDD). 5 consecutive transmembrane segments (helical) span residues 370 to 390 (AGLI…LFYY), 395 to 415 (FIAV…MALL), 419 to 439 (IGFA…GITA), 474 to 494 (ILVS…VTVG), and 498 to 518 (GFAF…FLFT). A disordered region spans residues 540 to 570 (LDPKALGAKPPLRRTRRPSRPAAGPVDPKEA).

Belongs to the SecD/SecF family. SecD subfamily. As to quaternary structure, forms a complex with SecF. Part of the essential Sec protein translocation apparatus which comprises SecA, SecYEG and auxiliary proteins SecDF. Other proteins may also be involved.

Its subcellular location is the cell membrane. Functionally, part of the Sec protein translocase complex. Interacts with the SecYEG preprotein conducting channel. SecDF uses the proton motive force (PMF) to complete protein translocation after the ATP-dependent function of SecA. The polypeptide is Protein translocase subunit SecD (Streptomyces coelicolor (strain ATCC BAA-471 / A3(2) / M145)).